A 556-amino-acid chain; its full sequence is Formate--tetrahydrofolate ligase (556 aa).

65–72 (TPAGEGKS) is an ATP binding site.

Belongs to the formate--tetrahydrofolate ligase family.

It carries out the reaction (6S)-5,6,7,8-tetrahydrofolate + formate + ATP = (6R)-10-formyltetrahydrofolate + ADP + phosphate. It functions in the pathway one-carbon metabolism; tetrahydrofolate interconversion. In Clostridium novyi (strain NT), this protein is Formate--tetrahydrofolate ligase.